A 476-amino-acid chain; its full sequence is FAD-dependent monooxygenase prhF (476 aa).

Residues Glu-41, Gly-55, and Arg-114 each coordinate FAD. Tyr-222 is an active-site residue. Positions 314 and 327 each coordinate FAD. N-linked (GlcNAc...) asparagine glycosylation occurs at Asn-343. The chain crosses the membrane as a helical span at residues 447–467; the sequence is LGSTPIQMLTLLLPCLFYFMY. A glycan (N-linked (GlcNAc...) asparagine) is linked at Asn-471.

This sequence belongs to the paxM FAD-dependent monooxygenase family. FAD serves as cofactor.

It localises to the membrane. It functions in the pathway secondary metabolite biosynthesis; terpenoid biosynthesis. Functionally, FAD-dependent monooxygenase; part of the gene cluster that mediates the biosynthesis of paraherquonin, a meroterpenoid with a unique, highly congested hexacyclic molecular architecture. The first step of the pathway is the synthesis of 3,5-dimethylorsellinic acid (DMOA) by the polyketide synthase prhL. Synthesis of DMOA is followed by farnesylation by the prenyltransferase prhE, methylesterification by the methyl-transferase prhM, epoxidation of the prenyl chain by the flavin-dependent monooxygenase prhF, and cyclization of the farnesyl moiety by the terpene cyclase prhH, to yield the tetracyclic intermediate, protoaustinoid A. The short chain dehydrogenase prhI then oxidizes the C-3 alcohol group of the terpene cyclase product to transform protoaustinoid A into protoaustinoid B. The FAD-binding monooxygenase prhJ catalyzes the oxidation of protoaustinoid B into preaustinoid A which is further oxidized into preaustinoid A1 by FAD-binding monooxygenase phrK. Finally, prhA leads to berkeleydione via the berkeleyone B intermediate. PrhA is a multifunctional dioxygenase that first desaturates at C5-C6 to form berkeleyone B, followed by rearrangement of the A/B-ring to form the cycloheptadiene moiety in berkeleydione. Berkeleydione serves as the key intermediate for the biosynthesis of paraherquonin as well as many other meroterpenoids. The cytochrome P450 monooxygenases prhB, prhD, and prhN, as well as the isomerase prhC, are probably involved in the late stage of paraherquonin biosynthesis, after the production of berkeleydione. Especially prhC might be a multifunctional enzyme that catalyzes the D-ring expansion via intramolecular methoxy rearrangement, as well as the hydrolysis of the expanded D-ring. This Penicillium brasilianum protein is FAD-dependent monooxygenase prhF.